We begin with the raw amino-acid sequence, 60 residues long: Conotoxin VnMRCL-012 (60 aa).

The N-terminal stretch at 1 to 22 (MRCLPVFVILLLLIASAPGVDA) is a signal peptide. The propeptide occupies 23 to 50 (QPKTKYDVPLASRHDFAKKTPKRLSKPR).

It belongs to the conotoxin T superfamily. Contains 2 disulfide bonds that can be either 'C1-C3, C2-C4' or 'C1-C4, C2-C3', since these disulfide connectivities have been observed for conotoxins with cysteine framework V (for examples, see AC P0DQQ7 and AC P81755). As to expression, expressed by the venom duct.

The protein resides in the secreted. This chain is Conotoxin VnMRCL-012, found in Conus ventricosus (Mediterranean cone).